The sequence spans 354 residues: Endo-1,4-beta-xylanase 1 (354 aa).

Residues 19–339 (SGLDAAMKAA…KPSYTSSLNT (321 aa)) form the GH10 domain. The N-linked (GlcNAc...) asparagine glycan is linked to Asn-117. The Proton donor role is filled by Glu-147. The Nucleophile role is filled by Glu-261. The cysteines at positions 289 and 295 are disulfide-linked.

The protein belongs to the glycosyl hydrolase 10 (cellulase F) family.

Its subcellular location is the secreted. The enzyme catalyses Endohydrolysis of (1-&gt;4)-beta-D-xylosidic linkages in xylans.. Its pathway is glycan degradation; xylan degradation. In terms of biological role, endo-1,4-beta-xylanase involved in the hydrolysis of xylan, a major structural heterogeneous polysaccharide found in plant biomass representing the second most abundant polysaccharide in the biosphere, after cellulose. Plays an important role in causing fusarium head blight (FHB) on cereal crops. The polypeptide is Endo-1,4-beta-xylanase 1 (XYL1) (Gibberella zeae (strain ATCC MYA-4620 / CBS 123657 / FGSC 9075 / NRRL 31084 / PH-1) (Wheat head blight fungus)).